Here is a 120-residue protein sequence, read N- to C-terminus: MNPKNNIFKSTQVDKSQYENIFKQINDGLDEKPSDDLSKSTKTDEKKFSEEELVVVEQLCRLKKIPKKNNEKNKKIIFPIKNIQKIESSCRINDRSIKRLKKPIYIGDKKINKLSIVLYK.

This is an uncharacterized protein from Acanthamoeba polyphaga mimivirus (APMV).